The following is a 509-amino-acid chain: Photosystem II CP47 reaction center protein (509 aa).

Helical transmembrane passes span 21–36, 101–115, 140–156, 203–218, 237–253, and 458–473; these read AVHM…WAGS, IVFS…IWHW, GIHL…FGAF, IAAG…FHLS, VLSS…AFVV, and SFAL…HGSR.

Belongs to the PsbB/PsbC family. PsbB subfamily. As to quaternary structure, PSII is composed of 1 copy each of membrane proteins PsbA, PsbB, PsbC, PsbD, PsbE, PsbF, PsbH, PsbI, PsbJ, PsbK, PsbL, PsbM, PsbT, PsbX, PsbY, PsbZ, Psb30/Ycf12, at least 3 peripheral proteins of the oxygen-evolving complex and a large number of cofactors. It forms dimeric complexes. Requires Binds multiple chlorophylls. PSII binds additional chlorophylls, carotenoids and specific lipids. as cofactor.

Its subcellular location is the plastid. The protein resides in the chloroplast thylakoid membrane. One of the components of the core complex of photosystem II (PSII). It binds chlorophyll and helps catalyze the primary light-induced photochemical processes of PSII. PSII is a light-driven water:plastoquinone oxidoreductase, using light energy to abstract electrons from H(2)O, generating O(2) and a proton gradient subsequently used for ATP formation. This chain is Photosystem II CP47 reaction center protein, found in Populus deltoides (Eastern poplar).